Consider the following 147-residue polypeptide: Cyanate hydratase (147 aa).

Residues arginine 88, glutamate 91, and serine 114 contribute to the active site.

It belongs to the cyanase family.

The enzyme catalyses cyanate + hydrogencarbonate + 3 H(+) = NH4(+) + 2 CO2. Functionally, catalyzes the reaction of cyanate with bicarbonate to produce ammonia and carbon dioxide. This chain is Cyanate hydratase, found in Polaromonas sp. (strain JS666 / ATCC BAA-500).